We begin with the raw amino-acid sequence, 497 residues long: Cytochrome P450 71A12 (497 aa).

The chain crosses the membrane as a helical span at residues isoleucine 4–leucine 24. Cysteine 439 lines the heme pocket.

This sequence belongs to the cytochrome P450 family. Heme serves as cofactor.

It is found in the membrane. Its function is as follows. Converts indole-3-acetaldoxime to indole cyanohydrin. Involved in the biosynthetic pathway to 4-hydroxyindole-3-carbonyl nitrile (4-OH-ICN), a cyanogenic metabolite required for inducible pathogen defense. The chain is Cytochrome P450 71A12 (CYP71A12) from Arabidopsis thaliana (Mouse-ear cress).